Reading from the N-terminus, the 134-residue chain is Acyl carrier protein, chloroplastic (134 aa).

The transit peptide at 1–51 (MATTFSASVSTLATSLATPTRISFQKPALVSRTNLSFNLRRSIPTRLSVSC) directs the protein to the chloroplast. The 76-residue stretch at 55-130 (PETIEKVSKI…EAAELIEELV (76 aa)) folds into the Carrier domain. The residue at position 90 (Ser-90) is an O-(pantetheine 4'-phosphoryl)serine.

It belongs to the acyl carrier protein (ACP) family. Post-translationally, 4'-phosphopantetheine is transferred from CoA to a specific serine of apo-ACP by acpS. This modification is essential for activity because fatty acids are bound in thioester linkage to the sulfhydryl of the prosthetic group. Seed.

The protein localises to the plastid. The protein resides in the chloroplast. Its pathway is lipid metabolism; fatty acid biosynthesis. Functionally, carrier of the growing fatty acid chain in fatty acid biosynthesis. In Brassica napus (Rape), this protein is Acyl carrier protein, chloroplastic (ACL1.A3).